The chain runs to 663 residues: Probable methylenetetrahydrofolate reductase (NADPH) (663 aa).

Glu-76 acts as the Proton donor/acceptor in catalysis. Residues 76-81 (EFFPPR) and 107-108 (TW) contribute to the NAD(+) site. Thr-107 carries the post-translational modification Phosphothreonine. FAD is bound by residues 107 to 108 (TW), His-141, 171 to 173 (RGD), 187 to 188 (RA), Tyr-210, 214 to 217 (HPQA), Asp-223, and Lys-230. Asp-173 is a substrate binding site. 3 residues coordinate substrate: Gln-241, Tyr-334, and Arg-338. Position 408 is a phosphoserine (Ser-408). At Thr-465 the chain carries Phosphothreonine. Residues 477-480 (QPET), 497-501 (TVNSQ), Thr-578, and Thr-591 each bind S-adenosyl-L-methionine.

It belongs to the methylenetetrahydrofolate reductase family. FAD serves as cofactor.

The enzyme catalyses (6S)-5-methyl-5,6,7,8-tetrahydrofolate + NADP(+) = (6R)-5,10-methylene-5,6,7,8-tetrahydrofolate + NADPH + H(+). The protein operates within one-carbon metabolism; tetrahydrofolate interconversion. The polypeptide is Probable methylenetetrahydrofolate reductase (NADPH) (Caenorhabditis elegans).